Reading from the N-terminus, the 333-residue chain is D-alanine--D-alanine ligase (333 aa).

Residues 124–329 form the ATP-grasp domain; that stretch reads KMWFSALGIR…FAQYLSGNIM (206 aa). An ATP-binding site is contributed by 154-209; that stretch reads ALEKWGSIFIKAASQGSSVGCYRVDNKEQLANSLEEAFKYSPYVVVEKTINARELE. 3 residues coordinate Mg(2+): D283, E296, and N298.

It belongs to the D-alanine--D-alanine ligase family. Mg(2+) is required as a cofactor. It depends on Mn(2+) as a cofactor.

It is found in the cytoplasm. The enzyme catalyses 2 D-alanine + ATP = D-alanyl-D-alanine + ADP + phosphate + H(+). It functions in the pathway cell wall biogenesis; peptidoglycan biosynthesis. In terms of biological role, cell wall formation. The sequence is that of D-alanine--D-alanine ligase from Shewanella halifaxensis (strain HAW-EB4).